The sequence spans 364 residues: Dual-specificity RNA methyltransferase RlmN (364 aa).

The active-site Proton acceptor is the glutamate 91. One can recognise a Radical SAM core domain in the interval 97–333 (ESDRGTLCIS…VTVRKTRGDD (237 aa)). Cysteine 104 and cysteine 338 are joined by a disulfide. Positions 111, 115, and 118 each coordinate [4Fe-4S] cluster. S-adenosyl-L-methionine contacts are provided by residues 164-165 (GE), serine 196, 218-220 (SLH), and asparagine 295. Cysteine 338 acts as the S-methylcysteine intermediate in catalysis.

Belongs to the radical SAM superfamily. RlmN family. The cofactor is [4Fe-4S] cluster.

The protein resides in the cytoplasm. The enzyme catalyses adenosine(2503) in 23S rRNA + 2 reduced [2Fe-2S]-[ferredoxin] + 2 S-adenosyl-L-methionine = 2-methyladenosine(2503) in 23S rRNA + 5'-deoxyadenosine + L-methionine + 2 oxidized [2Fe-2S]-[ferredoxin] + S-adenosyl-L-homocysteine. It carries out the reaction adenosine(37) in tRNA + 2 reduced [2Fe-2S]-[ferredoxin] + 2 S-adenosyl-L-methionine = 2-methyladenosine(37) in tRNA + 5'-deoxyadenosine + L-methionine + 2 oxidized [2Fe-2S]-[ferredoxin] + S-adenosyl-L-homocysteine. Specifically methylates position 2 of adenine 2503 in 23S rRNA and position 2 of adenine 37 in tRNAs. m2A2503 modification seems to play a crucial role in the proofreading step occurring at the peptidyl transferase center and thus would serve to optimize ribosomal fidelity. In Neisseria gonorrhoeae (strain ATCC 700825 / FA 1090), this protein is Dual-specificity RNA methyltransferase RlmN.